A 396-amino-acid chain; its full sequence is MGKTLSEIAQQLSTPQKVKKTVHKEVEATRAVPKVQLIYAFNGTGKTRLSRDFKQLLESKVHDGEGEDEAEQSALSRKKILYYNAFTEDLFYWDNDLQEDAEPKLKVQPNSYTNWLLTLLKDLGQDSNIVRYFQRYANDKLTPHFNPDFTEITFSMERGNDERSAHIKLSKGEESNFIWSVFYTLLDQVVTILNVADPDARETHAFDQLKYVFIDDPVSSLDDNHLIELAVNLAGLIKSSESDLKFIITTHSPIFYNVLFNELNGKVCYMLESFEDGTFALTEKYGDSNKSFSYHLHLKQTIEQAIADNNVERYHFTLLRNLYEKTASFLGYPKWSELLPDDKQLYLSRIINFTSHSTLSNEAVAEPTPAEKATVKLLLDHLKNNCGFWQQEQKNG.

Its function is as follows. Anticodon endonuclease (ACNase) that triggers the cleavage ligation of tRNA(Lys). It is activated by T4 stp protein and masked by the prrD protein (the endonuclease subunit of EcoprrI). The prr locus restricts phage T4 mutants lacking polynucleotide kinase or RNA ligase; T4 mutants lacking these genes manifest a T4-induced anticodon nuclease (ACNase). It is thought that Stp and other T4-encoded ACNase factors counteract the masking agents, thus activating the latent ACNase. In Escherichia coli, this protein is Anticodon nuclease.